We begin with the raw amino-acid sequence, 389 residues long: Succinate--CoA ligase [ADP-forming] subunit beta (389 aa).

The 236-residue stretch at 9–244 (KQLLAEYGIP…KTQEDPTEVI (236 aa)) folds into the ATP-grasp domain. Residues K46, 53–55 (GRG), G102, and E107 contribute to the ATP site. Residues N199 and D213 each coordinate Mg(2+). Residues N264 and 321–323 (GIV) each bind substrate.

Belongs to the succinate/malate CoA ligase beta subunit family. In terms of assembly, heterotetramer of two alpha and two beta subunits. Requires Mg(2+) as cofactor.

It carries out the reaction succinate + ATP + CoA = succinyl-CoA + ADP + phosphate. It catalyses the reaction GTP + succinate + CoA = succinyl-CoA + GDP + phosphate. It functions in the pathway carbohydrate metabolism; tricarboxylic acid cycle; succinate from succinyl-CoA (ligase route): step 1/1. Succinyl-CoA synthetase functions in the citric acid cycle (TCA), coupling the hydrolysis of succinyl-CoA to the synthesis of either ATP or GTP and thus represents the only step of substrate-level phosphorylation in the TCA. The beta subunit provides nucleotide specificity of the enzyme and binds the substrate succinate, while the binding sites for coenzyme A and phosphate are found in the alpha subunit. The polypeptide is Succinate--CoA ligase [ADP-forming] subunit beta (Stenotrophomonas maltophilia (strain R551-3)).